The following is a 498-amino-acid chain: Glycerol kinase (498 aa).

T12 provides a ligand contact to ADP. Residues T12, T13, and S14 each coordinate ATP. A sn-glycerol 3-phosphate-binding site is contributed by T12. Position 16 (R16) interacts with ADP. R82, E83, Y134, and D244 together coordinate sn-glycerol 3-phosphate. R82, E83, Y134, D244, and Q245 together coordinate glycerol. Residues T266 and G310 each contribute to the ADP site. Positions 266, 310, 314, and 411 each coordinate ATP. ADP-binding residues include G411 and N415.

It belongs to the FGGY kinase family.

It catalyses the reaction glycerol + ATP = sn-glycerol 3-phosphate + ADP + H(+). Its pathway is polyol metabolism; glycerol degradation via glycerol kinase pathway; sn-glycerol 3-phosphate from glycerol: step 1/1. With respect to regulation, inhibited by fructose 1,6-bisphosphate (FBP). Key enzyme in the regulation of glycerol uptake and metabolism. Catalyzes the phosphorylation of glycerol to yield sn-glycerol 3-phosphate. This chain is Glycerol kinase, found in Azorhizobium caulinodans (strain ATCC 43989 / DSM 5975 / JCM 20966 / LMG 6465 / NBRC 14845 / NCIMB 13405 / ORS 571).